The chain runs to 519 residues: MNEEPHAHENLVAKAQRSGDADPEVASTASEKQRSSGASAIAVGTEFPGNPQASRPQSLGMYLLEPFILILLFAYNFSSTVLKNEVIYQSCTAGFGYPDSVCQLLGTKNITNETKRIEEQVQPYAAQVTLAMRLVECFIPAFCGLFAGSWADHYGRKPLLMCSFLGYGLQYLISAAIAYCAMYTQGLVSPWWYVLSIVPLSCLGSSVTYSVAAVCFIADVSGGKVRSYRMIAYELAIYVGLLLGSLGSGYAYEATDAYIVFSISAVCIFTALFLMALLLPESLPARNRTLSTPTTDTSVVSMLKSLWSTCSKPREHQNRFMLTTIMVVLLLTAFVSDGSNSVFYKFMRIKFHWTVKQFTEYETVGILVPAVAGSGGVLFIWSLRKCTNSAILWLALVSLLSHCSSSLMKGFALESWQIYVAIGLGVFKSLVNPMCRTMITNLLPADERGKIFALLGVLQALSPLISSTLYVAIYTRTLNTEPGIFNVFSAFLFGIGIILLGTVWHKKSRNLVYYEPVFK.

The span at 1 to 11 (MNEEPHAHENL) shows a compositional bias: basic and acidic residues. The interval 1–51 (MNEEPHAHENLVAKAQRSGDADPEVASTASEKQRSSGASAIAVGTEFPGNP) is disordered. The segment covering 27 to 38 (STASEKQRSSGA) has biased composition (polar residues). The next 11 helical transmembrane spans lie at 58–78 (SLGMYLLEPFILILLFAYNFS), 128–148 (VTLAMRLVECFIPAFCGLFAG), 159–179 (LLMCSFLGYGLQYLISAAIAY), 197–217 (IVPLSCLGSSVTYSVAAVCFI), 230–250 (MIAYELAIYVGLLLGSLGSGY), 259–279 (IVFSISAVCIFTALFLMALLL), 320–340 (FMLTTIMVVLLLTAFVSDGSN), 363–383 (TVGILVPAVAGSGGVLFIWSL), 390–408 (AILWLALVSLLSHCSSSLM), 451–471 (IFALLGVLQALSPLISSTLYV), and 484–504 (IFNVFSAFLFGIGIILLGTVW).

This sequence belongs to the major facilitator superfamily. SLC46 family. Expressed in Malpighian tubules.

It localises to the cytoplasmic vesicle. Its subcellular location is the phagosome membrane. It catalyses the reaction N-acetyl-beta-D-glucosaminyl-(1-&gt;4)-1,6-anhydro-N-acetyl-beta-D-muramoyl-L-alanyl-gamma-D-glutamyl-meso-2,6-diaminopimeloyl-D-alanine(out) + n H(+)(out) = N-acetyl-beta-D-glucosaminyl-(1-&gt;4)-1,6-anhydro-N-acetyl-beta-D-muramoyl-L-alanyl-gamma-D-glutamyl-meso-2,6-diaminopimeloyl-D-alanine(in) + n H(+)(in). Its function is as follows. Putative proton-coupled transporter that delivers pathogen-associated molecular patterns to cytosolic pattern recognition receptors as part of the innate immune response to microbes. Likely transports anhydro-muropeptides that contain the amino acid diaminopimelic acid (DAP-type peptidoglycan muropeptides) such as tracheal toxin (TCT), common in Gram-negative bacteria. May transport TCT across the phagosome membrane for cytosolic recognition by PGRP-LE, triggering the activation of imd/Relish pathway and production of antimicrobial peptides. The transport mechanism, its electrogenicity and stoichiometry remain to be elucidated. The sequence is that of Probable peptidoglycan muropeptide transporter SLC46 (SLC46) from Drosophila melanogaster (Fruit fly).